The primary structure comprises 201 residues: Probable thymidylate kinase (201 aa).

10–17 (GIDGSGKS) is a binding site for ATP.

Belongs to the thymidylate kinase family.

The enzyme catalyses dTMP + ATP = dTDP + ADP. This Methanococcoides burtonii (strain DSM 6242 / NBRC 107633 / OCM 468 / ACE-M) protein is Probable thymidylate kinase.